The sequence spans 828 residues: Glycerol-3-phosphate acyltransferase 1, mitochondrial (828 aa).

Residues 1 to 87 are Cytoplasmic-facing; it reads MEESSVTIGT…FFNPSIPSLG (87 aa). The interval 80–120 is important for mitochondrial localization; it reads NPSIPSLGLRNVIYINETHTRHRGWLARRLSYILFVQERDV. Residues 88–118 lie within the membrane without spanning it; the sequence is LRNVIYINETHTRHRGWLARRLSYILFVQER. Residues 119–828 lie on the Cytoplasmic side of the membrane; sequence DVHKGMFATS…LEYILSFVVL (710 aa). The HXXXXD motif signature appears at 230–235; sequence HRSHID. CoA-binding residues include R278, R279, K288, R293, and R328. Residue S380 is modified to Phosphoserine. R462 is a binding site for CoA. A phosphoserine mark is found at S688 and S695. An N6-acetyllysine mark is found at K780 and K784.

This sequence belongs to the GPAT/DAPAT family.

The protein resides in the mitochondrion outer membrane. The enzyme catalyses sn-glycerol 3-phosphate + an acyl-CoA = a 1-acyl-sn-glycero-3-phosphate + CoA. It carries out the reaction sn-glycerol 3-phosphate + hexadecanoyl-CoA = 1-hexadecanoyl-sn-glycero-3-phosphate + CoA. It catalyses the reaction (9Z,12Z)-octadecadienoyl-CoA + sn-glycerol 3-phosphate = 1-(9Z,12Z)-octadecadienoyl-sn-glycero-3-phosphate + CoA. The catalysed reaction is sn-glycerol 3-phosphate + (9Z)-octadecenoyl-CoA = 1-(9Z-octadecenoyl)-sn-glycero-3-phosphate + CoA. The enzyme catalyses sn-glycerol 3-phosphate + octadecanoyl-CoA = 1-octadecanoyl-sn-glycero-3-phosphate + CoA. It carries out the reaction dodecanoyl-CoA + sn-glycerol 3-phosphate = 1-dodecanoyl-sn-glycerol 3-phosphate + CoA. It catalyses the reaction 1-acyl-sn-glycero-3-phospho-(1'-sn-glycerol) + an acyl-CoA = a 1,2-diacyl-sn-glycero-3-phospho-(1'-sn-glycerol) + CoA. Its pathway is phospholipid metabolism; CDP-diacylglycerol biosynthesis; CDP-diacylglycerol from sn-glycerol 3-phosphate: step 1/3. Functionally, mitochondrial membrane protein that catalyzes the essential first step of biosynthesis of glycerolipids such as triglycerides, phosphatidic acids and lysophosphatidic acids. Esterifies acyl-group from acyl-coenzyme A (acyl-CoA) to the sn-1 position of glycerol-3-phosphate, to produce lysophosphatidic acid. Has a narrow hydrophobic binding cleft that selects for a linear acyl chain. Catalytic activity is higher for substrates with a 16-carbon acyl chain. The protein is Glycerol-3-phosphate acyltransferase 1, mitochondrial of Rattus norvegicus (Rat).